The chain runs to 472 residues: Ribosomal protein uS12 methylthiotransferase RimO (472 aa).

In terms of domain architecture, MTTase N-terminal spans 1–114; that stretch reads MKFHIITLGC…IGDVVDTLQR (114 aa). Residues C10, C46, C78, C171, C175, and C178 each contribute to the [4Fe-4S] cluster site. The Radical SAM core domain occupies 157-388; sequence RITGPSAYLK…MRLQQGISRQ (232 aa). The region spanning 391 to 460 is the TRAM domain; sequence RRWVGRVIRV…DYDLWGEMVE (70 aa).

This sequence belongs to the methylthiotransferase family. RimO subfamily. [4Fe-4S] cluster is required as a cofactor.

The protein resides in the cytoplasm. The enzyme catalyses L-aspartate(89)-[ribosomal protein uS12]-hydrogen + (sulfur carrier)-SH + AH2 + 2 S-adenosyl-L-methionine = 3-methylsulfanyl-L-aspartate(89)-[ribosomal protein uS12]-hydrogen + (sulfur carrier)-H + 5'-deoxyadenosine + L-methionine + A + S-adenosyl-L-homocysteine + 2 H(+). Functionally, catalyzes the methylthiolation of an aspartic acid residue of ribosomal protein uS12. The chain is Ribosomal protein uS12 methylthiotransferase RimO from Roseiflexus sp. (strain RS-1).